The primary structure comprises 338 residues: Ketol-acid reductoisomerase (NADP(+)) (338 aa).

Residues 1–181 enclose the KARI N-terminal Rossmann domain; the sequence is MNVFYDKDAD…GGGRAGIIET (181 aa). NADP(+)-binding positions include 24–27, Arg-47, and Ser-52; that span reads YGSQ. Residue His-107 is part of the active site. Residue Gly-133 coordinates NADP(+). Positions 182–327 constitute a KARI C-terminal knotted domain; the sequence is NFREETETDL…AKLRAMMPWI (146 aa). Residues Asp-190, Glu-194, Glu-226, and Glu-230 each contribute to the Mg(2+) site. Ser-251 provides a ligand contact to substrate.

It belongs to the ketol-acid reductoisomerase family. Mg(2+) is required as a cofactor.

It carries out the reaction (2R)-2,3-dihydroxy-3-methylbutanoate + NADP(+) = (2S)-2-acetolactate + NADPH + H(+). The enzyme catalyses (2R,3R)-2,3-dihydroxy-3-methylpentanoate + NADP(+) = (S)-2-ethyl-2-hydroxy-3-oxobutanoate + NADPH + H(+). It participates in amino-acid biosynthesis; L-isoleucine biosynthesis; L-isoleucine from 2-oxobutanoate: step 2/4. Its pathway is amino-acid biosynthesis; L-valine biosynthesis; L-valine from pyruvate: step 2/4. In terms of biological role, involved in the biosynthesis of branched-chain amino acids (BCAA). Catalyzes an alkyl-migration followed by a ketol-acid reduction of (S)-2-acetolactate (S2AL) to yield (R)-2,3-dihydroxy-isovalerate. In the isomerase reaction, S2AL is rearranged via a Mg-dependent methyl migration to produce 3-hydroxy-3-methyl-2-ketobutyrate (HMKB). In the reductase reaction, this 2-ketoacid undergoes a metal-dependent reduction by NADPH to yield (R)-2,3-dihydroxy-isovalerate. The protein is Ketol-acid reductoisomerase (NADP(+)) of Burkholderia lata (strain ATCC 17760 / DSM 23089 / LMG 22485 / NCIMB 9086 / R18194 / 383).